Reading from the N-terminus, the 252-residue chain is Cell division protein ZapD (252 aa).

This sequence belongs to the ZapD family. In terms of assembly, interacts with FtsZ.

The protein localises to the cytoplasm. Functionally, cell division factor that enhances FtsZ-ring assembly. Directly interacts with FtsZ and promotes bundling of FtsZ protofilaments, with a reduction in FtsZ GTPase activity. In Dechloromonas aromatica (strain RCB), this protein is Cell division protein ZapD.